Reading from the N-terminus, the 141-residue chain is Putative pre-16S rRNA nuclease (141 aa).

This sequence belongs to the YqgF nuclease family.

It localises to the cytoplasm. Could be a nuclease involved in processing of the 5'-end of pre-16S rRNA. The protein is Putative pre-16S rRNA nuclease of Aliivibrio fischeri (strain MJ11) (Vibrio fischeri).